Here is a 360-residue protein sequence, read N- to C-terminus: uncharacterized protein (360 aa).

Residues 22–32 (EEDVEPNEEAE) are compositionally biased toward acidic residues. Positions 22–55 (EEDVEPNEEAEGPGGVHKKRRGARKKNRRQRMEG) are disordered. Basic residues predominate over residues 37–50 (VHKKRRGARKKNRR).

This is an uncharacterized protein from Caenorhabditis elegans.